Here is a 410-residue protein sequence, read N- to C-terminus: Interstrand DNA cross-link repair glycosylase (410 aa).

The short motif at 45–47 (QID) is the QXD; important for activity element.

The protein belongs to the DNA glycosylase AlkZ-like family.

Functionally, DNA glycosylase involved in the repair of interstrand DNA cross-links (ICLs), which are highly toxic DNA lesions that covalently tether the opposing strands of DNA, thereby inhibiting essential cellular processes such as DNA replication and transcription. Acts by unhooking both sides of the ICLs, forming abasic (AP) sites on both strands. Unhooks ICLs derived from various cross-linking agents, including azinomycin B (AZB) and mechlorethamine, also known as nitrogen mustard (NM), protecting cells from the toxicity of these cross-linking agents. In vitro, also acts on monoadducts and can catalyze the excision of N7-methylguanine (7mGua) from an oligonucleotide containing N7-methyldeoxyguanosine (d7mG). Shows no unhooking activity toward FaPy-ICLs. This is Interstrand DNA cross-link repair glycosylase (ycaQ) from Escherichia coli (strain K12).